The primary structure comprises 340 residues: Tetraacyldisaccharide 4'-kinase (340 aa).

Position 50–57 (50–57 (HGGGAGKT)) interacts with ATP.

This sequence belongs to the LpxK family.

It carries out the reaction a lipid A disaccharide + ATP = a lipid IVA + ADP + H(+). It participates in glycolipid biosynthesis; lipid IV(A) biosynthesis; lipid IV(A) from (3R)-3-hydroxytetradecanoyl-[acyl-carrier-protein] and UDP-N-acetyl-alpha-D-glucosamine: step 6/6. In terms of biological role, transfers the gamma-phosphate of ATP to the 4'-position of a tetraacyldisaccharide 1-phosphate intermediate (termed DS-1-P) to form tetraacyldisaccharide 1,4'-bis-phosphate (lipid IVA). In Rhodopseudomonas palustris (strain BisA53), this protein is Tetraacyldisaccharide 4'-kinase.